The primary structure comprises 324 residues: Malate dehydrogenase (324 aa).

Residues 21-26 (GAGRVG) and D45 each bind NAD(+). The substrate site is built by R94 and R100. NAD(+) is bound by residues N107 and 130–132 (VTN). Positions 132 and 163 each coordinate substrate. The active-site Proton acceptor is H187.

This sequence belongs to the LDH/MDH superfamily. MDH type 3 family.

It catalyses the reaction (S)-malate + NAD(+) = oxaloacetate + NADH + H(+). Its function is as follows. Catalyzes the reversible oxidation of malate to oxaloacetate. This chain is Malate dehydrogenase, found in Trichormus variabilis (strain ATCC 29413 / PCC 7937) (Anabaena variabilis).